Here is a 1012-residue protein sequence, read N- to C-terminus: Translation initiation factor IF-2, chloroplastic (1012 aa).

Over residues 75 to 102 the composition is skewed to low complexity; it reads GNSVSLDSNSNSSSSSKSGGDDGTGFVL. Disordered stretches follow at residues 75 to 132, 147 to 294, and 319 to 340; these read GNSV…VEER, EKLG…KEKK, and APPKPGKAPSPGKFKDDFRKKG. Over residues 152–175 the composition is skewed to polar residues; sequence SKVNGDKNNGSVNKPVRNNANASP. Positions 183-194 are enriched in low complexity; sequence SAASLKSKTLKS. Basic and acidic residues predominate over residues 208–231; that stretch reads VVKEVPKPSYNKNEEEKSQTRGGE. Residues 240–257 show a composition bias toward pro residues; the sequence is PQPPSKPQPLKPQQPSKP. Over residues 277–294 the composition is skewed to basic and acidic residues; that stretch reads VLRDKGAAETSVKSKEKK. Residues 488 to 661 enclose the tr-type G domain; sequence DRPPVITIMG…MLVAELQELK (174 aa). A G1 region spans residues 497–504; the sequence is GHVDHGKT. 497 to 504 contacts GTP; sequence GHVDHGKT. Positions 522–526 are G2; the sequence is GITQG. The G3 stretch occupies residues 547–550; that stretch reads DTPG. GTP contacts are provided by residues 547–551 and 601–604; these read DTPGH and NKID. A G4 region spans residues 601-604; that stretch reads NKID. The G5 stretch occupies residues 637–639; that stretch reads SAL.

The protein belongs to the TRAFAC class translation factor GTPase superfamily. Classic translation factor GTPase family. IF-2 subfamily.

The protein resides in the plastid. Its subcellular location is the chloroplast. In terms of biological role, one of the essential components for the initiation of protein synthesis. Protects formylmethionyl-tRNA from spontaneous hydrolysis and promotes its binding to the 30S ribosomal subunits. Also involved in the hydrolysis of GTP during the formation of the 70S ribosomal complex. This Phaseolus vulgaris (Kidney bean) protein is Translation initiation factor IF-2, chloroplastic (IF2CP).